The following is a 608-amino-acid chain: Developmental regulatory protein wetA (608 aa).

Disordered regions lie at residues 54–88 (ADHH…GVST), 102–125 (VDAT…VDPR), 146–186 (VSMS…MTRK), 202–226 (SKLR…NPPR), 309–352 (WPHQ…HAVP), 447–544 (AQTY…GDIG), and 556–576 (LMTG…EREA). 3 stretches are compositionally biased toward low complexity: residues 77-88 (ESTASASSGVST), 107-119 (PSQP…PGAS), and 163-175 (SSPG…SQPS). Residues 313 to 338 (QHPHPHPHPHHPQAHTHPHPHPHPHP) show a composition bias toward basic residues. 2 stretches are compositionally biased toward low complexity: residues 339 to 350 (HQQAVAGHPQHA) and 502 to 517 (SSNG…SGRG).

It belongs to the wetA family.

In terms of biological role, abaA and wetA are pivotal regulators of conidiophore development and conidium maturation. They act individually and together to regulate their own expression and that of numerous other sporulation-specific genes. Functions to maintain conidial dormancy by suppressing microcycle conidiation. This Gibberella zeae (strain ATCC MYA-4620 / CBS 123657 / FGSC 9075 / NRRL 31084 / PH-1) (Wheat head blight fungus) protein is Developmental regulatory protein wetA.